Here is a 387-residue protein sequence, read N- to C-terminus: DNA double-strand break repair protein Mre11 (387 aa).

Mn(2+) contacts are provided by D11, H13, D52, and D87. H88 acts as the Proton donor in catalysis. Residues H159, H190, and H192 each contribute to the Mn(2+) site.

Belongs to the MRE11/RAD32 family. As to quaternary structure, homodimer. Forms a heterotetramer composed of two Mre11 subunits and two Rad50 subunits. Interacts with HerA. It depends on Mn(2+) as a cofactor.

Its activity is regulated as follows. Nuclease activity is regulated by Rad50. Functionally, part of the Rad50/Mre11 complex, which is involved in the early steps of DNA double-strand break (DSB) repair. The complex may facilitate opening of the processed DNA ends to aid in the recruitment of HerA and NurA. Mre11 binds to DSB ends and has both double-stranded 3'-5' exonuclease activity and single-stranded endonuclease activity. In Sulfurisphaera tokodaii (strain DSM 16993 / JCM 10545 / NBRC 100140 / 7) (Sulfolobus tokodaii), this protein is DNA double-strand break repair protein Mre11.